A 166-amino-acid polypeptide reads, in one-letter code: Prorelaxin H1 (166 aa).

Residues 1-5 (SRAVA) form the signal peptide. Disulfide bonds link Cys16–Cys153, Cys28–Cys166, and Cys152–Cys157. A propeptide spans 37–139 (SLSQEDAPQT…KYLGLDTHSQ (103 aa)) (connecting peptide).

The protein belongs to the insulin family. As to quaternary structure, heterodimer of a B chain and an A chain linked by two disulfide bonds. Expressed in the corpus luteum of pregnancy but not in the placenta.

The protein localises to the secreted. Relaxin is an ovarian hormone that acts with estrogen to produce dilatation of the birth canal in many mammals. May be involved in remodeling of connective tissues during pregnancy, promoting growth of pubic ligaments and ripening of the cervix. The protein is Prorelaxin H1 (RNL1) of Pan troglodytes (Chimpanzee).